The sequence spans 276 residues: Dermonecrotic toxin LlSicTox-alphaIV2ii (276 aa).

The active site involves His5. Residues Glu25 and Asp27 each coordinate Mg(2+). His41 acts as the Nucleophile in catalysis. 2 disulfide bridges follow: Cys45-Cys51 and Cys47-Cys193. A Mg(2+)-binding site is contributed by Asp85.

It belongs to the arthropod phospholipase D family. Class II subfamily. Requires Mg(2+) as cofactor. As to expression, expressed by the venom gland.

Its subcellular location is the secreted. The catalysed reaction is an N-(acyl)-sphingosylphosphocholine = an N-(acyl)-sphingosyl-1,3-cyclic phosphate + choline. It carries out the reaction an N-(acyl)-sphingosylphosphoethanolamine = an N-(acyl)-sphingosyl-1,3-cyclic phosphate + ethanolamine. The enzyme catalyses a 1-acyl-sn-glycero-3-phosphocholine = a 1-acyl-sn-glycero-2,3-cyclic phosphate + choline. It catalyses the reaction a 1-acyl-sn-glycero-3-phosphoethanolamine = a 1-acyl-sn-glycero-2,3-cyclic phosphate + ethanolamine. Dermonecrotic toxins cleave the phosphodiester linkage between the phosphate and headgroup of certain phospholipids (sphingolipid and lysolipid substrates), forming an alcohol (often choline) and a cyclic phosphate. This toxin acts on sphingomyelin (SM). It may also act on ceramide phosphoethanolamine (CPE), lysophosphatidylcholine (LPC) and lysophosphatidylethanolamine (LPE), but not on lysophosphatidylserine (LPS), and lysophosphatidylglycerol (LPG). It acts by transphosphatidylation, releasing exclusively cyclic phosphate products as second products. Induces dermonecrosis, hemolysis, increased vascular permeability, edema, inflammatory response, and platelet aggregation. This Loxosceles laeta (South American recluse spider) protein is Dermonecrotic toxin LlSicTox-alphaIV2ii.